A 140-amino-acid polypeptide reads, in one-letter code: Ribonuclease P protein component (140 aa).

This sequence belongs to the RnpA family. Consists of a catalytic RNA component (M1 or rnpB) and a protein subunit.

The catalysed reaction is Endonucleolytic cleavage of RNA, removing 5'-extranucleotides from tRNA precursor.. In terms of biological role, RNaseP catalyzes the removal of the 5'-leader sequence from pre-tRNA to produce the mature 5'-terminus. It can also cleave other RNA substrates such as 4.5S RNA. The protein component plays an auxiliary but essential role in vivo by binding to the 5'-leader sequence and broadening the substrate specificity of the ribozyme. This chain is Ribonuclease P protein component, found in Ralstonia pickettii (strain 12J).